Here is a 153-residue protein sequence, read N- to C-terminus: Large ribosomal subunit protein uL30 (153 aa).

Belongs to the universal ribosomal protein uL30 family. As to quaternary structure, part of the 50S ribosomal subunit.

This chain is Large ribosomal subunit protein uL30, found in Methanosarcina mazei (strain ATCC BAA-159 / DSM 3647 / Goe1 / Go1 / JCM 11833 / OCM 88) (Methanosarcina frisia).